The chain runs to 178 residues: FXYD domain-containing ion transport regulator 5 (178 aa).

Positions 1–21 (MSPPSQLCLLTIVALILPSEG) are cleaved as a signal peptide. The tract at residues 21–126 (GQTPEKPRSS…YMPPSYIENP (106 aa)) is disordered. Residues 22–146 (QTPEKPRSSF…YDNTTLRKRG (125 aa)) lie on the Extracellular side of the membrane. The span at 29–58 (SSFTAHQSSVTTHVPVPDQTSPGVQTTPPI) shows a compositional bias: polar residues. Residues 70 to 79 (QTAAKTKTQQ) show a composition bias toward low complexity. A helical transmembrane segment spans residues 147-164 (LLVAAVLFITGIIILTSG). Residues 165–178 (KCRQFSQLCLNRHR) lie on the Cytoplasmic side of the membrane.

The protein belongs to the FXYD family. Regulatory subunit of the sodium/potassium-transporting ATPase which is composed of a catalytic alpha subunit, a non-catalytic beta subunit and an additional regulatory subunit. The regulatory subunit, a member of the FXYD protein family, modulates the enzymatic activity in a tissue- and isoform-specific way by changing affinities of the Na+/K+-ATPase toward Na(+), K(+) or ATP. Post-translationally, glycosylated. As to expression, spleen, lung, skeletal muscle, and testis.

It is found in the cell membrane. It localises to the basolateral cell membrane. Its function is as follows. Associates with and regulates the activity of the sodium/potassium-transporting ATPase (NKA) which catalyzes the hydrolysis of ATP coupled with the exchange of Na(+) and K(+) ions across the plasma membrane. May increase NKA activity by increasing the apparent affinity for Na(+). Involved in down-regulation of E-cadherin which results in reduced cell adhesion. Promotes metastasis. The protein is FXYD domain-containing ion transport regulator 5 (Fxyd5) of Rattus norvegicus (Rat).